A 107-amino-acid chain; its full sequence is Alpha-elapitoxin-Al2a (107 aa).

The signal sequence occupies residues 1–21 (MKTLLLTLVVVTIVCLDLGDS). Cystine bridges form between C24–C41, C34–C62, C47–C51, C66–C77, and C78–C83.

It belongs to the three-finger toxin family. Long-chain subfamily. Type II alpha-neurotoxin sub-subfamily. In terms of tissue distribution, expressed by the venom gland.

It localises to the secreted. Functionally, binds with high affinity to muscular (alpha-1/CHRNA1) and neuronal (alpha-7/CHRNA7) nicotinic acetylcholine receptor (nAChR) and inhibits acetylcholine from binding to the receptor, thereby impairing neuromuscular and neuronal transmission. The sequence is that of Alpha-elapitoxin-Al2a from Austrelaps labialis (Pygmy copperhead).